The following is a 287-amino-acid chain: Rhodopsin (287 aa).

At 1-5 the chain is on the extracellular side; it reads VNGAA. Residues 6 to 30 traverse the membrane as a helical segment; the sequence is YAGLCAYMFLLILVGFPVNFLTLYV. Residues 31–42 are Cytoplasmic-facing; that stretch reads TLEHKKLRTPLN. A helical transmembrane segment spans residues 43–65; it reads YILLNLAVADLFMVLGGFTTTMY. At 66 to 79 the chain is on the extracellular side; it reads TSAHGYFVLGRLGC. Cys-79 and Cys-156 are oxidised to a cystine. The helical transmembrane segment at 80–102 threads the bilayer; the sequence is NVEGFFATLGGEIALWSLVVLAV. Positions 103–105 match the 'Ionic lock' involved in activated form stabilization motif; the sequence is ERW. At 103 to 121 the chain is on the cytoplasmic side; it reads ERWIVVCKPISNFRFTEEH. Residues 122-142 form a helical membrane-spanning segment; that stretch reads AIMGLGFNWVMASACAVPPLV. Residues 143 to 171 are Extracellular-facing; it reads GWSRYIPEGMQCSCGINYYTRSEGFNNES. Residue Asn-169 is glycosylated (N-linked (GlcNAc...) asparagine). A helical transmembrane segment spans residues 172 to 193; it reads LVMKMLICHFLIPLFVIFFCYG. At 194-221 the chain is on the cytoplasmic side; sequence RMLCAVKEAAAAQQESETTQRAEREVSR. Residues 222–243 traverse the membrane as a helical segment; it reads MVVIMVISFLVCWLPYASVAWY. Residues 244 to 255 lie on the Extracellular side of the membrane; sequence IFCNQGSEFGPV. Residues 256–277 form a helical membrane-spanning segment; sequence FMTLPAFFAKSASIYNPLIYIC. Lys-265 carries the post-translational modification N6-(retinylidene)lysine. At 278-287 the chain is on the cytoplasmic side; that stretch reads MNKHSRHCMI.

Belongs to the G-protein coupled receptor 1 family. Opsin subfamily. Phosphorylated on some or all of the serine and threonine residues present in the C-terminal region. Post-translationally, contains one covalently linked retinal chromophore.

The protein resides in the membrane. It localises to the cell projection. Its subcellular location is the cilium. It is found in the photoreceptor outer segment. In terms of biological role, photoreceptor required for image-forming vision at low light intensity. While most salt water fish species use retinal as chromophore, most freshwater fish use 3-dehydroretinal, or a mixture of retinal and 3-dehydroretinal. Light-induced isomerization of 11-cis to all-trans retinal triggers a conformational change that activates signaling via G-proteins. Subsequent receptor phosphorylation mediates displacement of the bound G-protein alpha subunit by arrestin and terminates signaling. This is Rhodopsin (rho) from Taurulus bubalis (Long-spined sea scorpion).